We begin with the raw amino-acid sequence, 340 residues long: N-acetyl-gamma-glutamyl-phosphate reductase (340 aa).

Residue C146 is part of the active site.

Belongs to the NAGSA dehydrogenase family. Type 1 subfamily.

It localises to the cytoplasm. It carries out the reaction N-acetyl-L-glutamate 5-semialdehyde + phosphate + NADP(+) = N-acetyl-L-glutamyl 5-phosphate + NADPH + H(+). Its pathway is amino-acid biosynthesis; L-arginine biosynthesis; N(2)-acetyl-L-ornithine from L-glutamate: step 3/4. Its function is as follows. Catalyzes the NADPH-dependent reduction of N-acetyl-5-glutamyl phosphate to yield N-acetyl-L-glutamate 5-semialdehyde. The protein is N-acetyl-gamma-glutamyl-phosphate reductase of Streptococcus thermophilus (strain ATCC BAA-491 / LMD-9).